The chain runs to 222 residues: Peptide methionine sulfoxide reductase MsrA (222 aa).

Cys60 is an active-site residue.

This sequence belongs to the MsrA Met sulfoxide reductase family.

It carries out the reaction L-methionyl-[protein] + [thioredoxin]-disulfide + H2O = L-methionyl-(S)-S-oxide-[protein] + [thioredoxin]-dithiol. It catalyses the reaction [thioredoxin]-disulfide + L-methionine + H2O = L-methionine (S)-S-oxide + [thioredoxin]-dithiol. Its function is as follows. Has an important function as a repair enzyme for proteins that have been inactivated by oxidation. Catalyzes the reversible oxidation-reduction of methionine sulfoxide in proteins to methionine. The chain is Peptide methionine sulfoxide reductase MsrA from Pseudomonas entomophila (strain L48).